The following is a 200-amino-acid chain: ATP-dependent Clp protease proteolytic subunit (200 aa).

Ser101 functions as the Nucleophile in the catalytic mechanism. Residue His126 is part of the active site.

This sequence belongs to the peptidase S14 family. As to quaternary structure, component of the chloroplastic Clp protease core complex.

It localises to the plastid. The protein localises to the chloroplast stroma. The enzyme catalyses Hydrolysis of proteins to small peptides in the presence of ATP and magnesium. alpha-casein is the usual test substrate. In the absence of ATP, only oligopeptides shorter than five residues are hydrolyzed (such as succinyl-Leu-Tyr-|-NHMec, and Leu-Tyr-Leu-|-Tyr-Trp, in which cleavage of the -Tyr-|-Leu- and -Tyr-|-Trp bonds also occurs).. Functionally, cleaves peptides in various proteins in a process that requires ATP hydrolysis. Has a chymotrypsin-like activity. Plays a major role in the degradation of misfolded proteins. The polypeptide is ATP-dependent Clp protease proteolytic subunit (Adiantum capillus-veneris (Maidenhair fern)).